Here is a 341-residue protein sequence, read N- to C-terminus: Arfaptin-2 (341 aa).

Residues 46–84 (NETSIVSGGYGGSGDGLIPTGSGRHPSHSTSPSGPGDEV) form a disordered region. Residues 65–81 (TGSGRHPSHSTSPSGPG) are compositionally biased toward low complexity. The residue at position 72 (Ser-72) is a Phosphoserine. In terms of domain architecture, AH spans 121 to 321 (TVDLELELQI…NQKQLEQTLQ (201 aa)).

In terms of assembly, forms homodimers or heterodimers with ARFIP1. Interacts with RAC1. Specifically binds to GTP-bound ARF1 and ARF6, but binds to RAC1.GTP and RAC1.GDP with similar affinities. Interacts with ARL1. Interacts (via N-terminus) with IKBKB and IKBKG; these interactions inhibit activation of NF-kappa-B.

It is found in the golgi apparatus. The protein resides in the trans-Golgi network membrane. Plays a role in constitutive metalloproteinase (MMP) secretion from the trans Golgi network. May have important functions during vesicle biogenesis at certain cargo subdomains, which could be predominantly utilized by secreted MMPs, such as MMP7 and MMP2. Also involved in autophagy by regulating the starvation-dependent trafficking of ATG9A vesicles which deliver the phosphatidylinositol 4-kinase beta (PI4KB) to the autophagosome initiation site. Involved in phagophore growth during mitophagy by regulating ATG9A trafficking to mitochondria. In addition, plays a role in NF-kappa-B inhibition by interacting with IKBKB and IKBKG. The polypeptide is Arfaptin-2 (Mus musculus (Mouse)).